A 573-amino-acid polypeptide reads, in one-letter code: Urease subunit alpha 2 (573 aa).

Positions 135-573 constitute a Urease domain; sequence GGMDTHVHYI…ISLNQLYFFS (439 aa). His140, His142, and Lys223 together coordinate Ni(2+). Position 223 is an N6-carboxylysine (Lys223). His225 contacts substrate. Residues His252 and His278 each contribute to the Ni(2+) site. His326 acts as the Proton donor in catalysis. Asp366 is a Ni(2+) binding site.

It belongs to the metallo-dependent hydrolases superfamily. Urease alpha subunit family. In terms of assembly, heterotrimer of UreA (gamma), UreB (beta) and UreC (alpha) subunits. Three heterotrimers associate to form the active enzyme. The cofactor is Ni cation. Carboxylation allows a single lysine to coordinate two nickel ions.

It is found in the cytoplasm. It catalyses the reaction urea + 2 H2O + H(+) = hydrogencarbonate + 2 NH4(+). The protein operates within nitrogen metabolism; urea degradation; CO(2) and NH(3) from urea (urease route): step 1/1. Its function is as follows. Disrupting the ure2 operon has no effect on urease activity or pathogen survival in BALB/c mice when administered orally. The sequence is that of Urease subunit alpha 2 from Brucella abortus (strain 2308).